The primary structure comprises 298 residues: Ornithine carbamoyltransferase (298 aa).

Carbamoyl phosphate contacts are provided by residues 50–53 (STRT), Q77, R101, and 128–131 (HPCQ). Residues N159, D216, and 220 to 221 (SM) contribute to the L-ornithine site. Residues 256–257 (CL) and R284 each bind carbamoyl phosphate.

It belongs to the aspartate/ornithine carbamoyltransferase superfamily. OTCase family.

The protein localises to the cytoplasm. The enzyme catalyses carbamoyl phosphate + L-ornithine = L-citrulline + phosphate + H(+). The protein operates within amino-acid biosynthesis; L-arginine biosynthesis; L-arginine from L-ornithine and carbamoyl phosphate: step 1/3. In terms of biological role, reversibly catalyzes the transfer of the carbamoyl group from carbamoyl phosphate (CP) to the N(epsilon) atom of ornithine (ORN) to produce L-citrulline. The chain is Ornithine carbamoyltransferase from Methylococcus capsulatus (strain ATCC 33009 / NCIMB 11132 / Bath).